The primary structure comprises 698 residues: Polyribonucleotide nucleotidyltransferase (698 aa).

Mg(2+) is bound by residues D485 and D491. The 60-residue stretch at 552 to 611 (PRITTIKINPEKIRDVIGKGGAVIRALTEETGTTIELDDNGTVKIASSNGEATKEAIRRI) folds into the KH domain. The region spanning 621–689 (GRIYNGKVIR…RQGRVRLSIK (69 aa)) is the S1 motif domain.

The protein belongs to the polyribonucleotide nucleotidyltransferase family. As to quaternary structure, component of the RNA degradosome, which is a multiprotein complex involved in RNA processing and mRNA degradation. Mg(2+) is required as a cofactor.

It is found in the cytoplasm. It carries out the reaction RNA(n+1) + phosphate = RNA(n) + a ribonucleoside 5'-diphosphate. Involved in mRNA degradation. Catalyzes the phosphorolysis of single-stranded polyribonucleotides processively in the 3'- to 5'-direction. The sequence is that of Polyribonucleotide nucleotidyltransferase from Shewanella frigidimarina (strain NCIMB 400).